A 371-amino-acid polypeptide reads, in one-letter code: tRNA-specific 2-thiouridylase MnmA (371 aa).

Residues 11 to 18 and Met-37 contribute to the ATP site; that span reads GMSGGVDS. Positions 97 to 99 are interaction with target base in tRNA; sequence NPD. Catalysis depends on Cys-102, which acts as the Nucleophile. Residues Cys-102 and Cys-199 are joined by a disulfide bond. ATP is bound at residue Gly-127. Positions 149-151 are interaction with tRNA; it reads KDQ. Catalysis depends on Cys-199, which acts as the Cysteine persulfide intermediate. Positions 311–312 are interaction with tRNA; that stretch reads RY.

Belongs to the MnmA/TRMU family.

It is found in the cytoplasm. The enzyme catalyses S-sulfanyl-L-cysteinyl-[protein] + uridine(34) in tRNA + AH2 + ATP = 2-thiouridine(34) in tRNA + L-cysteinyl-[protein] + A + AMP + diphosphate + H(+). Functionally, catalyzes the 2-thiolation of uridine at the wobble position (U34) of tRNA, leading to the formation of s(2)U34. The protein is tRNA-specific 2-thiouridylase MnmA of Idiomarina loihiensis (strain ATCC BAA-735 / DSM 15497 / L2-TR).